A 700-amino-acid chain; its full sequence is Elongation factor G (700 aa).

In terms of domain architecture, tr-type G spans 8–290; that stretch reads ERYRNIGISA…AVIDYLPSPV (283 aa). GTP is bound by residues 17-24, 88-92, and 142-145; these read AHIDAGKT, DTPGH, and NKMD.

Belongs to the TRAFAC class translation factor GTPase superfamily. Classic translation factor GTPase family. EF-G/EF-2 subfamily.

Its subcellular location is the cytoplasm. In terms of biological role, catalyzes the GTP-dependent ribosomal translocation step during translation elongation. During this step, the ribosome changes from the pre-translocational (PRE) to the post-translocational (POST) state as the newly formed A-site-bound peptidyl-tRNA and P-site-bound deacylated tRNA move to the P and E sites, respectively. Catalyzes the coordinated movement of the two tRNA molecules, the mRNA and conformational changes in the ribosome. The sequence is that of Elongation factor G from Leptothrix cholodnii (strain ATCC 51168 / LMG 8142 / SP-6) (Leptothrix discophora (strain SP-6)).